Consider the following 255-residue polypeptide: Glutamate racemase (255 aa).

Substrate contacts are provided by residues 7 to 8 and 39 to 40; these read DS and YG. The active-site Proton donor/acceptor is the cysteine 70. 71–72 is a binding site for substrate; sequence NT. Cysteine 181 (proton donor/acceptor) is an active-site residue. Residue 182 to 183 coordinates substrate; that stretch reads TH.

The protein belongs to the aspartate/glutamate racemases family.

The catalysed reaction is L-glutamate = D-glutamate. The protein operates within cell wall biogenesis; peptidoglycan biosynthesis. Provides the (R)-glutamate required for cell wall biosynthesis. This chain is Glutamate racemase, found in Helicobacter pylori (strain ATCC 700392 / 26695) (Campylobacter pylori).